A 107-amino-acid polypeptide reads, in one-letter code: Probable monothiol glutaredoxin 2 (107 aa).

Residues 7–107 (FKFIENEIKN…LEKMLKAYTR (101 aa)) enclose the Glutaredoxin domain. Lys-24 provides a ligand contact to glutathione. Position 32 (Cys-32) interacts with [2Fe-2S] cluster. Glutathione contacts are provided by residues Arg-61, Phe-73, and 86–87 (CD).

This sequence belongs to the glutaredoxin family. Monothiol subfamily.

In Rickettsia conorii (strain ATCC VR-613 / Malish 7), this protein is Probable monothiol glutaredoxin 2 (grxC2).